Reading from the N-terminus, the 468-residue chain is Meiotically up-regulated gene 111 protein (468 aa).

Helical transmembrane passes span 13–33 (LVLIYLWYLVDCTSFSMNSVT), 59–79 (IVSASSCLLQYLVALVVVPFY), 92–112 (VFTTWVGEEYFFFASTLSILY), 116–136 (FPTCAYFVIFSISFLLGISGT), 158–178 (IVVLNSIFVVSSCIGPFLGSI), 190–210 (LISWTIHFINFVFHSLLAVFF), 285–305 (PIPIVLLCFFLYSLLTPFFDI), 330–350 (FGSLLTCSVCLFLTYVGGFSV), 356–376 (TMLIGLTATTLIIFILYFATA), 382–402 (LALFYGITSSIGPSIHGLVAA), 417–437 (ALLEASATFISYPFQSLAFIV), and 446–466 (FFIGPICICLLGSISSYLLLG).

The protein resides in the membrane. In terms of biological role, has a role in meiosis. This is Meiotically up-regulated gene 111 protein (mug111) from Schizosaccharomyces pombe (strain 972 / ATCC 24843) (Fission yeast).